We begin with the raw amino-acid sequence, 330 residues long: N-acetyl-gamma-glutamyl-phosphate reductase (330 aa).

Cysteine 143 is an active-site residue.

Belongs to the NAGSA dehydrogenase family. Type 1 subfamily.

The protein resides in the cytoplasm. The enzyme catalyses N-acetyl-L-glutamate 5-semialdehyde + phosphate + NADP(+) = N-acetyl-L-glutamyl 5-phosphate + NADPH + H(+). Its pathway is amino-acid biosynthesis; L-arginine biosynthesis; N(2)-acetyl-L-ornithine from L-glutamate: step 3/4. Catalyzes the NADPH-dependent reduction of N-acetyl-5-glutamyl phosphate to yield N-acetyl-L-glutamate 5-semialdehyde. The chain is N-acetyl-gamma-glutamyl-phosphate reductase from Methanocorpusculum labreanum (strain ATCC 43576 / DSM 4855 / Z).